Consider the following 367-residue polypeptide: Lysophosphatidic acid receptor 5 (367 aa).

At 1–25 the chain is on the extracellular side; the sequence is MQANSSAKSLPTECPDYQPIHHLHL. Residue Asn-4 is glycosylated (N-linked (GlcNAc...) asparagine). Residues 26 to 46 form a helical membrane-spanning segment; that stretch reads VVYSVVLAAGLPLNALALWVF. The Cytoplasmic segment spans residues 47 to 54; sequence LRALRVHS. A helical membrane pass occupies residues 55-75; the sequence is VVSVYMCNLAASDLLFTLSLP. The Extracellular portion of the chain corresponds to 76–95; the sequence is LRLSYYARHYWPFPDFLCQL. Cysteines 93 and 174 form a disulfide. A helical transmembrane segment spans residues 96–116; that stretch reads AGAVFQMNMYGSCIFLTLINV. Over 117-135 the chain is Cytoplasmic; sequence DRYAAIVHPLRLRHLRRPR. Residues 136–156 traverse the membrane as a helical segment; that stretch reads VARLLCLGVWALILVFAVPTI. At 157 to 186 the chain is on the extracellular side; the sequence is LAHQPSSCARDGRNVSLCFESFSDKLWKGS. N-linked (GlcNAc...) asparagine glycosylation occurs at Asn-170. A helical transmembrane segment spans residues 187–207; that stretch reads LLPLLLLAEALGFLLPLAAVV. At 208–238 the chain is on the cytoplasmic side; that stretch reads YSSGRVFWTLARPDATRSQRRRKTVRLLLAS. A helical membrane pass occupies residues 239-259; it reads LVIFLLCFVPYNATLAVYGLL. The Extracellular segment spans residues 260-275; the sequence is RGEVVPASSEARKKVR. The helical transmembrane segment at 276–296 threads the bilayer; the sequence is GVLMVMVLLAGANCVLDPLVY. The Cytoplasmic segment spans residues 297-367; that stretch reads YFSAEGFRNT…FTPSHEDSSF (71 aa). The segment covering 332 to 350 has biased composition (low complexity); that stretch reads LTETAHASTLTTTSQGQLQ. Positions 332-367 are disordered; it reads LTETAHASTLTTTSQGQLQPSDPRSSFTPSHEDSSF. The span at 351-360 shows a compositional bias: polar residues; that stretch reads PSDPRSSFTP.

Belongs to the G-protein coupled receptor 1 family.

It localises to the cell membrane. In terms of biological role, receptor for lysophosphatidic acid (LPA), a mediator of diverse cellular activities. This is Lysophosphatidic acid receptor 5 (LPAR5) from Bos taurus (Bovine).